Here is a 70-residue protein sequence, read N- to C-terminus: Ribosome modulation factor (70 aa).

Belongs to the ribosome modulation factor family.

Its subcellular location is the cytoplasm. During stationary phase, converts 70S ribosomes to an inactive dimeric form (100S ribosomes). The sequence is that of Ribosome modulation factor from Marinobacter adhaerens (strain DSM 23420 / HP15).